The chain runs to 371 residues: tRNA 2-selenouridine synthase (371 aa).

The region spanning 12 to 135 (FLDDVPMMDM…MRTFLLDTTQ (124 aa)) is the Rhodanese domain. The active-site S-selanylcysteine intermediate is the Cys95.

The protein belongs to the SelU family. As to quaternary structure, monomer.

The enzyme catalyses 5-methylaminomethyl-2-thiouridine(34) in tRNA + selenophosphate + (2E)-geranyl diphosphate + H2O + H(+) = 5-methylaminomethyl-2-selenouridine(34) in tRNA + (2E)-thiogeraniol + phosphate + diphosphate. The catalysed reaction is 5-methylaminomethyl-2-thiouridine(34) in tRNA + (2E)-geranyl diphosphate = 5-methylaminomethyl-S-(2E)-geranyl-thiouridine(34) in tRNA + diphosphate. It catalyses the reaction 5-methylaminomethyl-S-(2E)-geranyl-thiouridine(34) in tRNA + selenophosphate + H(+) = 5-methylaminomethyl-2-(Se-phospho)selenouridine(34) in tRNA + (2E)-thiogeraniol. It carries out the reaction 5-methylaminomethyl-2-(Se-phospho)selenouridine(34) in tRNA + H2O = 5-methylaminomethyl-2-selenouridine(34) in tRNA + phosphate. Involved in the post-transcriptional modification of the uridine at the wobble position (U34) of tRNA(Lys), tRNA(Glu) and tRNA(Gln). Catalyzes the conversion of 2-thiouridine (S2U-RNA) to 2-selenouridine (Se2U-RNA). Acts in a two-step process involving geranylation of 2-thiouridine (S2U) to S-geranyl-2-thiouridine (geS2U) and subsequent selenation of the latter derivative to 2-selenouridine (Se2U) in the tRNA chain. In Pseudomonas entomophila (strain L48), this protein is tRNA 2-selenouridine synthase.